The sequence spans 146 residues: Aspartate carbamoyltransferase regulatory chain (146 aa).

Residues Cys102, Cys107, Cys131, and Cys134 each coordinate Zn(2+).

Belongs to the PyrI family. As to quaternary structure, contains catalytic and regulatory chains. It depends on Zn(2+) as a cofactor.

Its function is as follows. Involved in allosteric regulation of aspartate carbamoyltransferase. This Clostridium botulinum (strain Okra / Type B1) protein is Aspartate carbamoyltransferase regulatory chain.